The primary structure comprises 781 residues: LPS-assembly protein LptD (781 aa).

A signal peptide spans 1–24 (MKKNYYTVLSLSILTALYSTSSQA).

The protein belongs to the LptD family. In terms of assembly, component of the lipopolysaccharide transport and assembly complex. Interacts with LptE and LptA.

The protein localises to the cell outer membrane. In terms of biological role, together with LptE, is involved in the assembly of lipopolysaccharide (LPS) at the surface of the outer membrane. The protein is LPS-assembly protein LptD of Histophilus somni (strain 129Pt) (Haemophilus somnus).